The chain runs to 379 residues: Sporozoite surface protein P36 (379 aa).

An N-terminal signal peptide occupies residues 1–33 (MAYNIWEEYIMANFHNVYPVVTNLFLFIALSYS). 6-Cys domains lie at 69–206 (FVFF…VKAN) and 215–379 (FIKG…TVES). Cystine bridges form between cysteine 91–cysteine 101, cysteine 115–cysteine 186, and cysteine 129–cysteine 184. Residues asparagine 98 and asparagine 118 are each glycosylated (N-linked (GlcNAc...) asparagine). N-linked (GlcNAc...) asparagine glycosylation occurs at asparagine 206. 3 disulfide bridges follow: cysteine 219/cysteine 243, cysteine 257/cysteine 360, and cysteine 295/cysteine 358. 2 N-linked (GlcNAc...) asparagine glycosylation sites follow: asparagine 298 and asparagine 374.

The protein localises to the cell surface. It is found in the cell membrane. In terms of biological role, involved in sporozoite infection of hepatocytes and replication therein. The protein is Sporozoite surface protein P36 (PF36) of Plasmodium falciparum (isolate 3D7).